A 555-amino-acid chain; its full sequence is Solute carrier family 22 member 2 (555 aa).

Topologically, residues 1–21 are cytoplasmic; it reads MPTTVDDVLEHGGEFHFFQKQ. A helical membrane pass occupies residues 22-42; that stretch reads MFFLLALLSATFTPIYVGIVF. The Extracellular portion of the chain corresponds to 43 to 150; that stretch reads LGFTPDHRCR…LVCANSWMLD (108 aa). N-linked (GlcNAc...) asparagine glycosylation is present at Asn72. The chain crosses the membrane as a helical span at residues 151-171; it reads LFQASVNVGFFFGSVSIGYIA. Residues 172–177 lie on the Cytoplasmic side of the membrane; sequence DRFGRK. A helical transmembrane segment spans residues 178 to 198; sequence LCLLTTVLINAAAGVLMAISP. At 199-210 the chain is on the extracellular side; the sequence is TYTWMLIFRLIQ. Residues 211 to 231 form a helical membrane-spanning segment; sequence GLVSKAGWLIGYILITEFVGR. The Cytoplasmic segment spans residues 232 to 238; sequence RYRRTVG. The helical transmembrane segment at 239–259 threads the bilayer; that stretch reads IFYQVAYTVGLLVLAGVAYAL. Residues 260–263 are Extracellular-facing; that stretch reads PHWR. Residues 264 to 284 form a helical membrane-spanning segment; that stretch reads WLQFTVTLPNFFFLLYYWCIP. The Proline-rich sequence motif lies at 284-288; that stretch reads PESPR. At 285 to 348 the chain is on the cytoplasmic side; the sequence is ESPRWLISQN…VRTPQIRKHT (64 aa). A helical membrane pass occupies residues 349–369; sequence MILMYNWFTSSVLYQGLIMHM. The Extracellular segment spans residues 370-375; sequence GLAGDN. Residues 376–396 traverse the membrane as a helical segment; the sequence is IYLDFFYSALVEFPAAFMIIV. Topologically, residues 397-404 are cytoplasmic; it reads TIDRIGRR. The helical transmembrane segment at 405-425 threads the bilayer; it reads YPWAASNMVAGAACLASVFIP. At 426–432 the chain is on the extracellular side; that stretch reads GDLQWLK. Residues 433–453 form a helical membrane-spanning segment; it reads IIISCLGRMGITMAYEIVRLV. At 454–464 the chain is on the cytoplasmic side; the sequence is NAELYPTFIRN. Residues 465-485 traverse the membrane as a helical segment; sequence LGVHICSSMCDIGGIITPFLV. Residues 486-494 lie on the Extracellular side of the membrane; the sequence is YRLTNIWLE. The helical transmembrane segment at 495–515 threads the bilayer; it reads LPLMVFGVLGLVAGGLVLLLP. Over 516-555 the chain is Cytoplasmic; that stretch reads ETKGKALPETIEEAENMQRPRKNKEKMIYLQVQKLDIPLN.

The protein belongs to the major facilitator (TC 2.A.1) superfamily. Organic cation transporter (TC 2.A.1.19) family. In terms of processing, tyrosine phosphorylated.

Its subcellular location is the basolateral cell membrane. The protein resides in the basal cell membrane. It localises to the apical cell membrane. It carries out the reaction (R)-noradrenaline(out) = (R)-noradrenaline(in). It catalyses the reaction (R)-adrenaline(out) = (R)-adrenaline(in). The enzyme catalyses serotonin(out) = serotonin(in). The catalysed reaction is dopamine(out) = dopamine(in). It carries out the reaction histamine(out) = histamine(in). It catalyses the reaction thiamine(in) = thiamine(out). The enzyme catalyses creatinine(in) = creatinine(out). The catalysed reaction is 1-methylnicotinamide(out) = 1-methylnicotinamide(in). It carries out the reaction guanidine(out) = guanidine(in). It catalyses the reaction choline(out) = choline(in). The enzyme catalyses agmatine(out) = agmatine(in). The catalysed reaction is putrescine(out) = putrescine(in). It carries out the reaction spermidine(in) = spermidine(out). It catalyses the reaction tyramine(in) = tyramine(out). The enzyme catalyses L-histidyl-L-proline diketopiperazine(in) = L-histidyl-L-proline diketopiperazine(out). The catalysed reaction is (R)-salsolinol(in) = (R)-salsolinol(out). It carries out the reaction N-methyl-(R)-salsolinol(in) = N-methyl-(R)-salsolinol(out). It catalyses the reaction acetylcholine(in) = acetylcholine(out). The enzyme catalyses prostaglandin F2alpha(out) = prostaglandin F2alpha(in). The catalysed reaction is prostaglandin E2(out) = prostaglandin E2(in). Tyrosine phosphorylation of the transporter leads to activation of the transport activity. Inhibited by cGMP, most likely through a cGMP-binding protein that interacts with OCT2. Electrogenic voltage-dependent transporter that mediates the transport of a variety of organic cations such as endogenous bioactive amines, cationic drugs and xenobiotics. Functions as a Na(+)-independent, bidirectional uniporter. Cation cellular uptake or release is driven by the electrochemical potential, i.e. membrane potential and concentration gradient. However, may also engage electroneutral cation exchange when saturating concentrations of cation substrates are reached. Predominantly expressed at the basolateral membrane of hepatocytes and proximal tubules and involved in the uptake and disposition of cationic compounds by hepatic and renal clearance from the blood flow. Implicated in monoamine neurotransmitters uptake such as histamine, dopamine, adrenaline/epinephrine, noradrenaline/norepinephrine, serotonin and tyramine, thereby supporting a physiological role in the central nervous system by regulating interstitial concentrations of neurotransmitters. Also capable of transporting dopaminergic neuromodulators cyclo(his-pro), salsolinol and N-methyl-salsolinol, thereby involved in the maintenance of dopaminergic cell integrity in the central nervous system. Mediates the bidirectional transport of acetylcholine (ACh) at the apical membrane of ciliated cell in airway epithelium, thereby playing a role in luminal release of ACh from bronchial epithelium. Also transports guanidine and endogenous monoamines such as vitamin B1/thiamine, creatinine and N-1-methylnicotinamide (NMN). Mediates the uptake and efflux of quaternary ammonium compound choline. Mediates the bidirectional transport of polyamine agmatine and the uptake of polyamines putrescine and spermidine. Able to transport non-amine endogenous compounds such as prostaglandin E2 (PGE2) and prostaglandin F2-alpha (PGF2-alpha). Also involved in the uptake of xenobiotic 4-(4-(dimethylamino)styryl)-N-methylpyridinium (ASP). May contribute to regulate the transport of organic compounds in testis across the blood-testis-barrier. The sequence is that of Solute carrier family 22 member 2 (SLC22A2) from Pongo abelii (Sumatran orangutan).